A 97-amino-acid chain; its full sequence is U-reduvitoxin-Pr10a (97 aa).

The first 18 residues, 1 to 18, serve as a signal peptide directing secretion; that stretch reads MKTALFLVFALAFIAVEG. Pacifastin domains lie at 22-59 and 62-97; these read KACSKPGQTVLAPDGCNHCRCSKNGIIMGCTKKMCPPR and KQSCKPGATFKHKDGCNTCKCSDDGKSARCTARLCW. Cystine bridges form between Cys-24-Cys-42, Cys-37-Cys-56, and Cys-40-Cys-51. The tract at residues 57 to 59 is pro-Pro-Arg motif necessary for proteolytic processing; sequence PPR. Intrachain disulfides connect Cys-65–Cys-82, Cys-77–Cys-96, and Cys-80–Cys-91.

This sequence belongs to the protease inhibitor I19 family. As to expression, expressed by the venom gland.

The protein resides in the secreted. Functionally, inhibits trypsin activity and prophenoloxidase (PPO) activation, an enzyme essential for both clotting and insect innate immune responses. It does not inhibit activity of chymotrypsin and protease K, and has no effect on phenoloxidase (PO) activity. The chain is U-reduvitoxin-Pr10a from Platymeris rhadamanthus (Red spot assassin bug).